The following is a 205-amino-acid chain: Coenzyme Q-binding protein COQ10, mitochondrial (205 aa).

It belongs to the COQ10 family. In terms of assembly, interacts with coenzyme Q.

The protein localises to the mitochondrion inner membrane. In terms of biological role, required for the function of coenzyme Q in the respiratory chain. May serve as a chaperone or may be involved in the transport of Q6 from its site of synthesis to the catalytic sites of the respiratory complexes. This chain is Coenzyme Q-binding protein COQ10, mitochondrial (coq10-1), found in Dictyostelium discoideum (Social amoeba).